We begin with the raw amino-acid sequence, 259 residues long: Archaerhodopsin-2 (259 aa).

Residues 1 to 6 constitute a propeptide that is removed on maturation; it reads MDPIAL. Gln-7 is modified (pyrrolidone carboxylic acid). Topologically, residues 7–18 are extracellular; it reads QAGFDLLNDGRP. The helical transmembrane segment at 19–40 threads the bilayer; that stretch reads ETLWLGIGTLLMLIGTFYFIAR. Over 41–49 the chain is Cytoplasmic; the sequence is GWGVTDKEA. The helical transmembrane segment at 50–71 threads the bilayer; the sequence is REYYAITILVPGIASAAYLAMF. The Extracellular portion of the chain corresponds to 72 to 90; that stretch reads FGIGVTEVELASGTVLDIY. Residues 91–112 traverse the membrane as a helical segment; it reads YARYADWLFTTPLLLLDLALLA. At 113-115 the chain is on the cytoplasmic side; it reads KVD. A helical membrane pass occupies residues 116–138; sequence RVTIGTLIGVDALMIVTGLIGAL. At 139–142 the chain is on the extracellular side; sequence SKTP. A helical transmembrane segment spans residues 143 to 171; the sequence is LARYTWWLFSTIAFLFVLYYLLTSLRSAA. The Cytoplasmic segment spans residues 172-174; that stretch reads AKR. A helical membrane pass occupies residues 175–203; the sequence is SEEVRSTFNTLTALVAVLWTAYPILWIVG. Topologically, residues 204 to 211 are extracellular; sequence TEGAGVVG. Residues 212–244 traverse the membrane as a helical segment; that stretch reads LGIETLAFMVLDVTAKVGFGFVLLRSRAILGET. N6-(retinylidene)lysine is present on Lys-227. Topologically, residues 245 to 259 are cytoplasmic; it reads EAPEPSAGADASAAD.

It belongs to the archaeal/bacterial/fungal opsin family.

The protein resides in the cell membrane. Functionally, light-driven proton pump. It may interact with bacterioruberin in the claret membrane. The sequence is that of Archaerhodopsin-2 from Halobacterium sp. (strain aus-2).